A 92-amino-acid polypeptide reads, in one-letter code: Small ribosomal subunit protein bS20 (92 aa).

The interval 1–24 (MANSAQARKRARQAAKANSHNSAL) is disordered.

Belongs to the bacterial ribosomal protein bS20 family.

Functionally, binds directly to 16S ribosomal RNA. The sequence is that of Small ribosomal subunit protein bS20 from Paraburkholderia xenovorans (strain LB400).